A 601-amino-acid polypeptide reads, in one-letter code: Ubiquitin carboxyl-terminal hydrolase MINDY-2 (601 aa).

The tract at residues 1 to 205 (MENSPDSPQP…LCKEEEEDPA (205 aa)) is disordered. A compositionally biased stretch (basic and acidic residues) spans 24-34 (EGRRRGGREAE). Thr62 is subject to Phosphothreonine. Ser82 carries the post-translational modification Phosphoserine. Composition is skewed to low complexity over residues 127–141 (EEPS…SCSE), 148–169 (SPSL…SSEF), and 186–195 (GAAGPPRAAP). The Nucleophile role is filled by Cys244. The active-site Proton acceptor is the His426. The tract at residues 485–537 (GQQDQIDQDYLMALSLQQEQQSQEINWEQIPEGISDLELAKKLQEEEDRRASQ) is ubiquitin-binding domain (UBD). The tract at residues 534-601 (RASQYYQEQE…EKEKNSCVIL (68 aa)) is disordered. The segment covering 536–570 (SQYYQEQEQAQAVVTTTTPSTQAQQGQPAQASPSS) has biased composition (low complexity). The segment covering 577-601 (SERKRKEPREKDKEKEKEKNSCVIL) has biased composition (basic and acidic residues).

This sequence belongs to the MINDY deubiquitinase family. FAM63 subfamily.

The catalysed reaction is Thiol-dependent hydrolysis of ester, thioester, amide, peptide and isopeptide bonds formed by the C-terminal Gly of ubiquitin (a 76-residue protein attached to proteins as an intracellular targeting signal).. Hydrolase that can remove 'Lys-48'-linked conjugated ubiquitin from proteins. Can also bind to polyubiquitin chains of different linkage types, including 'Lys-6', 'Lys-11', 'Lys-29', 'Lys-33' and 'Lys-63'. May play a regulatory role at the level of protein turnover. This chain is Ubiquitin carboxyl-terminal hydrolase MINDY-2 (Mindy2), found in Mus musculus (Mouse).